The sequence spans 341 residues: Ferrochelatase (341 aa).

Positions 189 and 293 each coordinate Fe cation.

Belongs to the ferrochelatase family.

The protein resides in the cytoplasm. It carries out the reaction heme b + 2 H(+) = protoporphyrin IX + Fe(2+). It participates in porphyrin-containing compound metabolism; protoheme biosynthesis; protoheme from protoporphyrin-IX: step 1/1. In terms of biological role, catalyzes the ferrous insertion into protoporphyrin IX. This chain is Ferrochelatase, found in Pseudomonas fluorescens (strain Pf0-1).